The sequence spans 473 residues: Sucrose-6-phosphate hydrolase (473 aa).

Residues 44–47 (LLND), Gln63, 106–107 (YS), 167–168 (RD), and Glu224 each bind substrate. Residue Asp47 is part of the active site.

The protein belongs to the glycosyl hydrolase 32 family.

The protein localises to the cytoplasm. It carries out the reaction Hydrolysis of terminal non-reducing beta-D-fructofuranoside residues in beta-D-fructofuranosides.. Its pathway is glycan biosynthesis; sucrose metabolism. The chain is Sucrose-6-phosphate hydrolase (scrB) from Lactococcus lactis subsp. lactis (Streptococcus lactis).